Consider the following 85-residue polypeptide: UPF0386 protein TM1040_0419 (85 aa).

The tract at residues 62-85 is disordered; it reads SKSSRPYQISEKGRRSVRAQLDNR.

The protein belongs to the UPF0386 family.

The chain is UPF0386 protein TM1040_0419 from Ruegeria sp. (strain TM1040) (Silicibacter sp.).